The primary structure comprises 915 residues: Scaffold attachment factor B1 (915 aa).

Low complexity predominate over residues 1-24 (MAETLSGLGDSGAAGAAALSSASS). Positions 1-33 (MAETLSGLGDSGAAGAAALSSASSETGTRRLSD) are disordered. Ala-2 carries the post-translational modification N-acetylalanine. Phosphoserine is present on residues Ser-24 and Ser-55. The region spanning 31 to 65 (LSDLRVIDLRAELRKRNVDSSGNKSVLMERLKKAI) is the SAP domain. Residues 64 to 118 (AIEDEGGNPDEIEITSEGNKKTSKRSSKGRKPEEEGVEDNGLEENSGDGQEDVET) form a disordered region. Residues 67–77 (DEGGNPDEIEI) are compositionally biased toward acidic residues. Ser-79 is subject to Phosphoserine. Residues 98–118 (EGVEDNGLEENSGDGQEDVET) are compositionally biased toward acidic residues. Residues Lys-172 and Lys-186 each participate in a glycyl lysine isopeptide (Lys-Gly) (interchain with G-Cter in SUMO2) cross-link. Thr-188 carries the phosphothreonine modification. 3 positions are modified to phosphoserine: Ser-195, Ser-197, and Ser-209. Residues 221–407 (LGETCKSEPV…EKGRSSCGRN (187 aa)) form a disordered region. The span at 225–234 (CKSEPVKEES) shows a compositional bias: basic and acidic residues. A Glycyl lysine isopeptide (Lys-Gly) (interchain with G-Cter in SUMO) cross-link involves residue Lys-231. The segment covering 275-286 (SESTAHAQSSKA) has biased composition (polar residues). Residues 293–309 (VKREPAEQPGDGERTDC) are compositionally biased toward basic and acidic residues. A Glycyl lysine isopeptide (Lys-Gly) (interchain with G-Cter in SUMO) cross-link involves residue Lys-294. Positions 319-330 (EQSSAASELAEA) are enriched in low complexity. Basic and acidic residues predominate over residues 346-359 (EARDSKEDGRKFDF). Positions 371–383 (ESSTSEGADQKMS) are enriched in polar residues. Residue Lys-381 forms a Glycyl lysine isopeptide (Lys-Gly) (interchain with G-Cter in SUMO2) linkage. Phosphoserine is present on residues Ser-383 and Ser-384. The span at 390–401 (DTKRLSKEEKGR) shows a compositional bias: basic and acidic residues. Lys-392 is covalently cross-linked (Glycyl lysine isopeptide (Lys-Gly) (interchain with G-Cter in SUMO2)). An RRM domain is found at 406-484 (RNFWVSGLSS…KMISVEKAKN (79 aa)). Ser-415 carries the post-translational modification Phosphoserine. Composition is skewed to basic and acidic residues over residues 477–551 (ISVE…ERSR) and 559–570 (GTERTVVMDKSK). Disordered stretches follow at residues 477–641 (ISVE…EREE), 671–708 (RERM…ERRP), and 749–915 (FDHR…TRRY). Residues Lys-483, Lys-514, Lys-543, and Lys-570 each participate in a glycyl lysine isopeptide (Lys-Gly) (interchain with G-Cter in SUMO2) cross-link. The interval 528-792 (GDDGSGEKSK…RHGGPERHGR (265 aa)) is interaction with POLR2A. Interaction with SFRS1; SFRS9 and SFRS10. A Glycyl lysine isopeptide (Lys-Gly) (interchain with G-Cter in SUMO1); alternate cross-link involves residue Lys-578. Residue Lys-578 forms a Glycyl lysine isopeptide (Lys-Gly) (interchain with G-Cter in SUMO2); alternate linkage. A phosphoserine mark is found at Ser-580, Ser-582, Ser-601, and Ser-604. Basic and acidic residues predominate over residues 581–641 (GSKERASKSQ…RMQAQWEREE (61 aa)). The Nuclear localization signal signature appears at 599–616 (KRSVVSFDKVKEPRKSRD). Positions 599–915 (KRSVVSFDKV…PSDARFTRRY (317 aa)) are interaction with SAFB2. Lys-607 carries the N6-acetyllysine modification. Residues 749–796 (FDHRDRGRYPDHSVDRREGSRSMMGEREGQHYPERHGGPERHGRDSRD) show a composition bias toward basic and acidic residues. Arg-811 carries the post-translational modification Omega-N-methylarginine. Composition is skewed to basic and acidic residues over residues 817-832 (PRRD…DDRS) and 841-851 (MMDRDHKRWQG). A Glycyl lysine isopeptide (Lys-Gly) (interchain with G-Cter in SUMO2) cross-link involves residue Lys-847. 3 positions are modified to asymmetric dimethylarginine: Arg-868, Arg-874, and Arg-884. The span at 892–901 (GMQGGFGGQS) shows a compositional bias: gly residues. Basic and acidic residues predominate over residues 905–915 (RPSDARFTRRY).

Monomer and homodimer. Forms heterodimers with SAFB2. Interacts with KHDRBS3. Interacts with CLK2. Interacts with POLR2A, SRSF1/ASF, SRSF9/SRp30c and SFSF10/TRA2B. Interacts with isoform 1 and isoform 2 of SRPK1 and inhibits its activity. Interacts with RBMX. Interacts with FUS. Interacts with ZBED4. Sumoylated by PIAS1 with SUMO1 and SUMO2/3, desumoylated by SENP1. Sumoylation is required for transcriptional repressor activity. As to expression, ubiquitous. Expressed at high levels in the CNS and at low levels in the liver. Expressed in a wide number of breast cancer cell lines.

It localises to the nucleus. Functionally, binds to scaffold/matrix attachment region (S/MAR) DNA and forms a molecular assembly point to allow the formation of a 'transcriptosomal' complex (consisting of SR proteins and RNA polymerase II) coupling transcription and RNA processing. Functions as an estrogen receptor corepressor and can also bind to the HSP27 promoter and decrease its transcription. Thereby acts as a negative regulator of cell proliferation. When associated with RBMX, binds to and stimulates transcription from the SREBF1 promoter. The chain is Scaffold attachment factor B1 (SAFB) from Homo sapiens (Human).